Reading from the N-terminus, the 185-residue chain is Probable RNA polymerase sigma-C factor (185 aa).

The Polymerase core binding motif lies at 52–65 (DLTQETFLRAIGAI). Positions 149 to 168 (YADAAAVCGCPVGTIRSRVA) form a DNA-binding region, H-T-H motif.

This sequence belongs to the sigma-70 factor family. ECF subfamily.

Its function is as follows. Sigma factors are initiation factors that promote the attachment of RNA polymerase to specific initiation sites and are then released. The protein is Probable RNA polymerase sigma-C factor (sigC) of Mycobacterium bovis (strain ATCC BAA-935 / AF2122/97).